The following is an 880-amino-acid chain: Calcium-transporting ATPase lmo0841 (880 aa).

4 helical membrane-spanning segments follow: residues 47-67, 68-88, 243-263, and 271-291; these read LWKLFLETFKDPMVIVLVIAA, LVQLVLGEVVESLIIFLVLIV, LGLGILALCVLIFAVEAGRVL, and MATAILNAFMFAVAVAVAAIP. Ca(2+)-binding residues include Val-287, Ala-288, Ile-290, and Glu-292. The active-site 4-aspartylphosphate intermediate is Asp-334. 5 helical membrane passes run 681-701, 707-727, 756-776, 819-839, and 854-874; these read IAYLFAGNLGAIIAILFALVL, FTALQLLFINLVNDSLPAIAL, AVISRGVLIGIAVIISQYIGM, YVIGAVLLCFVLYGITVLPGA, and WSIAAGLALAAVVMMEIIKVV. Positions 716 and 720 each coordinate Ca(2+).

The protein belongs to the cation transport ATPase (P-type) (TC 3.A.3) family. Type IIA subfamily.

The protein resides in the cell membrane. It carries out the reaction Ca(2+)(in) + ATP + H2O = Ca(2+)(out) + ADP + phosphate + H(+). Its activity is regulated as follows. Phosphorylation is inhibited by EGTA and vanadate. ATPase activity is stimulated by Sr(2+). Inhibited by very high concentrations of cyclopiazonic acid (CPA). Catalyzes the hydrolysis of ATP coupled with the transport of calcium. The transport is electrogenic with a probable ATP:Ca(2+):H(+) stoichiometry of 1:1:1. May have an important role in survival of the bacterium when stressed by a combination of a high calcium concentration and alkaline pH. The chain is Calcium-transporting ATPase lmo0841 from Listeria monocytogenes serovar 1/2a (strain ATCC BAA-679 / EGD-e).